Reading from the N-terminus, the 225-residue chain is PKHD-type hydroxylase KPK_3192 (225 aa).

In terms of domain architecture, Fe2OG dioxygenase spans 78–177 (TISAPLFNRY…RQASFLWIQS (100 aa)). Residues histidine 96, aspartate 98, and histidine 158 each coordinate Fe cation. Arginine 168 contributes to the 2-oxoglutarate binding site.

Fe(2+) is required as a cofactor. Requires L-ascorbate as cofactor.

The sequence is that of PKHD-type hydroxylase KPK_3192 from Klebsiella pneumoniae (strain 342).